Here is a 503-residue protein sequence, read N- to C-terminus: Geissoschizine oxidase (503 aa).

Residues 7 to 27 traverse the membrane as a helical segment; sequence FSSPSFFFLLPFLFLLIKPLI. Position 441 (cysteine 441) interacts with heme.

It belongs to the cytochrome P450 family. Requires heme as cofactor.

Its subcellular location is the membrane. It catalyses the reaction (19E)-geissoschizine + reduced [NADPH--hemoprotein reductase] + O2 = akuammicine + formate + oxidized [NADPH--hemoprotein reductase] + H2O + H(+). It carries out the reaction (19E)-geissoschizine + reduced [NADPH--hemoprotein reductase] + O2 = 3,17-didehydrostemmadenine + oxidized [NADPH--hemoprotein reductase] + 2 H2O. The enzyme catalyses 3,17-didehydrostemmadenine = 17-dehydropreakuammicine. It functions in the pathway alkaloid biosynthesis. In terms of biological role, monooxygenase involved in the biosynthesis of curare monoterpene indole alkaloids (MIAs), natural products such as diaboline, a pharmacologically active compound used to regulate blood pressure. Curare alkaloids act as animal glycine receptor antagonists. Catalyzes the conversion of geissoschizine to dehydropreakuammicine by cyclization, which is spontaneously converted into akuammicine by aromatization. This is Geissoschizine oxidase from Strychnos sp.